The chain runs to 318 residues: NADH-ubiquinone oxidoreductase chain 1 (318 aa).

Transmembrane regions (helical) follow at residues 2 to 22 (FMVN…FLTL), 76 to 96 (TLAL…HPLI), 98 to 118 (FNLG…SILW), 140 to 160 (ISYE…SGSF), 171 to 191 (HSWL…STLA), 217 to 237 (AGSF…MNAL), 253 to 273 (ELYT…FLWI), and 294 to 314 (LPLT…TSGI).

It belongs to the complex I subunit 1 family. As to quaternary structure, core subunit of respiratory chain NADH dehydrogenase (Complex I) which is composed of 45 different subunits.

It localises to the mitochondrion inner membrane. The enzyme catalyses a ubiquinone + NADH + 5 H(+)(in) = a ubiquinol + NAD(+) + 4 H(+)(out). Its function is as follows. Core subunit of the mitochondrial membrane respiratory chain NADH dehydrogenase (Complex I) which catalyzes electron transfer from NADH through the respiratory chain, using ubiquinone as an electron acceptor. Essential for the catalytic activity and assembly of complex I. This Ateles paniscus (Black spider monkey) protein is NADH-ubiquinone oxidoreductase chain 1 (MT-ND1).